An 867-amino-acid polypeptide reads, in one-letter code: GRB2-associated and regulator of MAPK protein 1 (867 aa).

The interval N12–E322 is CABIT. Y464 carries the phosphotyrosine modification. 3 disordered regions span residues S511–E530, D536–S594, and P735–A758. Polar residues-rich tracts occupy residues S544 to T554 and S569 to L581. Basic and acidic residues predominate over residues K740–E749. The 66-residue stretch at I802–M867 folds into the SAM domain.

It belongs to the GAREM family.

In terms of biological role, adapter protein that may provide a link between cell surface epidermal growth factor receptor and the MAPK/ERK signaling pathway. May promote cell proliferation. The sequence is that of GRB2-associated and regulator of MAPK protein 1 (garem1) from Danio rerio (Zebrafish).